We begin with the raw amino-acid sequence, 341 residues long: L-threonine 3-dehydrogenase (341 aa).

Residue Cys38 coordinates Zn(2+). Active-site charge relay system residues include Thr40 and His43. Zn(2+)-binding residues include His63, Glu64, Cys93, Cys96, Cys99, and Cys107. NAD(+)-binding positions include Ile175, Asp195, Arg200, 262-264 (LGI), and 286-287 (IY).

It belongs to the zinc-containing alcohol dehydrogenase family. Homotetramer. The cofactor is Zn(2+).

It is found in the cytoplasm. It catalyses the reaction L-threonine + NAD(+) = (2S)-2-amino-3-oxobutanoate + NADH + H(+). It participates in amino-acid degradation; L-threonine degradation via oxydo-reductase pathway; glycine from L-threonine: step 1/2. In terms of biological role, catalyzes the NAD(+)-dependent oxidation of L-threonine to 2-amino-3-ketobutyrate. In Shigella boydii serotype 4 (strain Sb227), this protein is L-threonine 3-dehydrogenase.